We begin with the raw amino-acid sequence, 413 residues long: Exodeoxyribonuclease I (413 aa).

The 182-residue stretch at leucine 12 to isoleucine 193 folds into the Exonuclease domain. Residues aspartate 15, glutamate 17, and aspartate 186 each coordinate Mg(2+). Glutamate 17 provides a ligand contact to substrate. The region spanning proline 202–asparagine 349 is the ExoI SH3-like domain. Residues asparagine 350–histidine 413 form the ExoI C-terminal domain.

In terms of assembly, monomer. Interacts with ssb (via C-terminus); this interaction stimulates the exonuclease activity by recruiting the enzyme to its substrate. It depends on Mg(2+) as a cofactor.

It carries out the reaction Exonucleolytic cleavage in the 3'- to 5'-direction to yield nucleoside 5'-phosphates.. Degrades single-stranded DNA (ssDNA) in a highly processive manner. Also functions as a DNA deoxyribophosphodiesterase that releases deoxyribose-phosphate moieties following the cleavage of DNA at an apurinic/apyrimidinic (AP) site by either an AP endonuclease or AP lyase. The sequence is that of Exodeoxyribonuclease I (sbcB) from Buchnera aphidicola subsp. Acyrthosiphon pisum (strain APS) (Acyrthosiphon pisum symbiotic bacterium).